The sequence spans 549 residues: MLNQKIQNPNPDELMIEVDLCYELDPYELKLDEMIEAEPEPEMIEGLPASDALTPADRYLELFEHVQSAKIFPDSKTFPDCAPKMDPLDILIRYRKVRRHRDFDLRKFVENHFWLPEVYSREYVSDPQNSLKEHIDQLWPVLTREPQDHIPWSSLLALPQSYIVPGGRFSETYYWDSYFTMLGLAESGREDLLKCMADNFAWMIENYGHIPNGNRTYYLSRSQPPVFALMVELFEEDGVRGARRYLDHLKMEYAFWMDGAESLIPNQAYRHVVRMPDGSLLNRYWDDRDTPRDESWLEDVETAKHSGRPPNEVYRDLRAGAASGWDYSSRWLRDTGRLASIRTTQFIPIDLNAFLFKLESAIANISALKGEKETEALFRQKASARRDAVNRYLWDDENGIYRDYDWRREQLALFSAAAIVPLYVGMANHEQADRLANAVRSRLLTPGGILASEYETGEQWDKPNGWAPLQWMAIQGFKMYGDDLLGDEIARSWLKTVNQFYLEQHKMIEKYHIADGVPREGGGGEYPLQDGFGWTNGVVRRLIGLYGEP.

Residues Arg-168, 175–176 (WD), Asn-212, 221–223 (RSQ), 292–294 (RDE), and Gly-324 each bind substrate. Catalysis depends on proton donor/acceptor residues Asp-326 and Glu-509. Substrate is bound at residue Glu-525.

The protein belongs to the glycosyl hydrolase 37 family. As to quaternary structure, monomer.

It localises to the cytoplasm. It catalyses the reaction alpha,alpha-trehalose + H2O = alpha-D-glucose + beta-D-glucose. It functions in the pathway glycan degradation; trehalose degradation; D-glucose from alpha,alpha-trehalose: step 1/1. Its function is as follows. Hydrolyzes trehalose to glucose. Could be involved, in cells returning to low osmolarity conditions, in the utilization of the accumulated cytoplasmic trehalose, which was synthesized in response to high osmolarity. The sequence is that of Cytoplasmic trehalase from Escherichia coli (strain 55989 / EAEC).